A 414-amino-acid chain; its full sequence is MINLKLIETNFDEFNAKLKAKKVDEGVLKNLLDTYNELKIKKQELENLQAVQNAKSKEVGILARSGADTTLLKTELEENKKLMQTASNLVSELETKLDTVASRVPNVIDDDVPLGKDDNDNVCIKTILEPREFNFTPKEHFELGENLGWLDFATGAKLSGSRFTVLRSDGARLSRALVNFMIDFNTARGFELVNVPFLVNSNTLYGTGQLPKFEEDLYKIRDEDLYLIPTSEVPVTNIYNNEIIPVENLPIKMTCYSACFRQEAGSAGRDTRGMIRQHQFEKVELVSISKPEDSAKILDEMVSCASDMLKELGLPHRHMMLCSADLGFGAAKTIDLEVWLPGQGKYREISSISNTRDFQARRAKIRYKDGKKNALVHTLNGSSLAVGRTLIAIMENYQNSDGSINIPEVLKKYM.

Residue 230–232 coordinates L-serine; that stretch reads TSE. 261–263 contributes to the ATP binding site; sequence RQE. Residue Glu-284 coordinates L-serine. Residue 348–351 coordinates ATP; that stretch reads EISS. Ser-382 provides a ligand contact to L-serine.

It belongs to the class-II aminoacyl-tRNA synthetase family. Type-1 seryl-tRNA synthetase subfamily. In terms of assembly, homodimer. The tRNA molecule binds across the dimer.

Its subcellular location is the cytoplasm. It catalyses the reaction tRNA(Ser) + L-serine + ATP = L-seryl-tRNA(Ser) + AMP + diphosphate + H(+). It carries out the reaction tRNA(Sec) + L-serine + ATP = L-seryl-tRNA(Sec) + AMP + diphosphate + H(+). It functions in the pathway aminoacyl-tRNA biosynthesis; selenocysteinyl-tRNA(Sec) biosynthesis; L-seryl-tRNA(Sec) from L-serine and tRNA(Sec): step 1/1. In terms of biological role, catalyzes the attachment of serine to tRNA(Ser). Is also able to aminoacylate tRNA(Sec) with serine, to form the misacylated tRNA L-seryl-tRNA(Sec), which will be further converted into selenocysteinyl-tRNA(Sec). This chain is Serine--tRNA ligase, found in Campylobacter fetus subsp. fetus (strain 82-40).